The primary structure comprises 170 residues: Ergosterol biosynthetic protein 28 (170 aa).

The next 3 membrane-spanning stretches (helical) occupy residues Phe7 to Ile27, Thr116 to Phe136, and Phe141 to Leu161.

The protein belongs to the ERG28 family. As to quaternary structure, heterotetramer of ERG25, ERG26, ERG27 and ERG28. ERG28 acts as a scaffold to tether ERG27 and other 4,4-demethylation-related enzymes, forming a demethylation enzyme complex, in the endoplasmic reticulum.

The protein localises to the endoplasmic reticulum membrane. It functions in the pathway steroid metabolism; ergosterol biosynthesis. Sterol 24-C-methyltransferase; part of the third module of ergosterol biosynthesis pathway that includes the late steps of the pathway. ERG28 has a role as a scaffold to help anchor the catalytic components of the C-4 demethylation complex ERG25, ERG26 and ERG27 to the endoplasmic reticulum. The third module or late pathway involves the ergosterol synthesis itself through consecutive reactions that mainly occur in the endoplasmic reticulum (ER) membrane. Firstly, the squalene synthase ERG9 catalyzes the condensation of 2 farnesyl pyrophosphate moieties to form squalene, which is the precursor of all steroids. Squalene synthase is crucial for balancing the incorporation of farnesyl diphosphate (FPP) into sterol and nonsterol isoprene synthesis. Secondly, squalene is converted into lanosterol by the consecutive action of the squalene epoxidase ERG1 and the lanosterol synthase ERG7. Then, the delta(24)-sterol C-methyltransferase ERG6 methylates lanosterol at C-24 to produce eburicol. Eburicol is the substrate of the sterol 14-alpha demethylase encoded by CYP51A, CYP51B and CYP51C, to yield 4,4,24-trimethyl ergosta-8,14,24(28)-trienol. CYP51B encodes the enzyme primarily responsible for sterol 14-alpha-demethylation, and plays an essential role in ascospore formation. CYP51A encodes an additional sterol 14-alpha-demethylase, induced on ergosterol depletion and responsible for the intrinsic variation in azole sensitivity. The third CYP51 isoform, CYP51C, does not encode a sterol 14-alpha-demethylase, but is required for full virulence on host wheat ears. The C-14 reductase ERG24 then reduces the C14=C15 double bond which leads to 4,4-dimethylfecosterol. A sequence of further demethylations at C-4, involving the C-4 demethylation complex containing the C-4 methylsterol oxidases ERG25, the sterol-4-alpha-carboxylate 3-dehydrogenase ERG26 and the 3-keto-steroid reductase ERG27, leads to the production of fecosterol via 4-methylfecosterol. ERG28 has a role as a scaffold to help anchor ERG25, ERG26 and ERG27 to the endoplasmic reticulum. The C-8 sterol isomerase ERG2 then catalyzes the reaction which results in unsaturation at C-7 in the B ring of sterols and thus converts fecosterol to episterol. The sterol-C5-desaturases ERG3A and ERG3BB then catalyze the introduction of a C-5 double bond in the B ring to produce 5-dehydroepisterol. The C-22 sterol desaturases ERG5A and ERG5B further convert 5-dehydroepisterol into ergosta-5,7,22,24(28)-tetraen-3beta-ol by forming the C-22(23) double bond in the sterol side chain. Finally, ergosta-5,7,22,24(28)-tetraen-3beta-ol is substrate of the C-24(28) sterol reductase ERG4 to produce ergosterol. The polypeptide is Ergosterol biosynthetic protein 28 (Gibberella zeae (strain ATCC MYA-4620 / CBS 123657 / FGSC 9075 / NRRL 31084 / PH-1) (Wheat head blight fungus)).